The following is a 56-amino-acid chain: MEFDSYIDWYNNLLTMPLNDVILGVKDTIEDKTVYLSLSDSKVIKMDNTSFVMGYY.

Belongs to the skunalikevirus head completion protein 2 family.

It is found in the virion. Its function is as follows. Probably functions as a stopper that is part of the head-tail connector and that locks the viral DNA in the capsid. During assembly, functions as a docking platform which the preassembled tail can bind to. Plays a role in morphogenesis of the virion capsid after genome packaging. This is Probable head completion protein 2 from Lactococcus lactis (Lactococcus lactis bacteriophage SK1).